We begin with the raw amino-acid sequence, 139 residues long: MDAGKGEYQIAKSDEEWRRELTPEQYGVLRQAGTEQPWTGELLDESRAGVYACAACGAELFRSGTKFDSGCGWPSFYESVRPEAVELLEDTRLGITRTEVRCANCGSHLGHVFPDGFRTPTGDRYCMNSISLDFQPEDE.

The MsrB domain maps to 14 to 137 (DEEWRRELTP…NSISLDFQPE (124 aa)). Positions 53, 56, 102, and 105 each coordinate Zn(2+). C126 serves as the catalytic Nucleophile.

This sequence belongs to the MsrB Met sulfoxide reductase family. The cofactor is Zn(2+).

It carries out the reaction L-methionyl-[protein] + [thioredoxin]-disulfide + H2O = L-methionyl-(R)-S-oxide-[protein] + [thioredoxin]-dithiol. The protein is Peptide methionine sulfoxide reductase MsrB of Leifsonia xyli subsp. xyli (strain CTCB07).